The sequence spans 351 residues: Phosphoribosylformylglycinamidine cyclo-ligase (351 aa).

It belongs to the AIR synthase family.

Its subcellular location is the cytoplasm. The catalysed reaction is 2-formamido-N(1)-(5-O-phospho-beta-D-ribosyl)acetamidine + ATP = 5-amino-1-(5-phospho-beta-D-ribosyl)imidazole + ADP + phosphate + H(+). The protein operates within purine metabolism; IMP biosynthesis via de novo pathway; 5-amino-1-(5-phospho-D-ribosyl)imidazole from N(2)-formyl-N(1)-(5-phospho-D-ribosyl)glycinamide: step 2/2. This is Phosphoribosylformylglycinamidine cyclo-ligase from Idiomarina loihiensis (strain ATCC BAA-735 / DSM 15497 / L2-TR).